Consider the following 398-residue polypeptide: MRASYLFTSESVSEGHPDKVCDRISDEIVDLFFREGPKAGIDPWAIRAACETLATTNKVVIAGETRGPASVTNEHIEHVVREAIKDIGYEQDGFHWKTADIEILLHPQSADIAQGVDALQPGTNQEEGAGDQGIMFGYATNETPDLMPAPIFYAHKILRLISEARHSGKEKVLGPDSKSQVTIQYENGKPVGVREIVVSHQHLVEDMTSNQVRERVEPYVREALPEGWITDKTIWHINPTGKFFIGGPDGDTGLTGRKIIVDTYGGAAPHGGGAFSGKDPTKVDRSAAYASRYLAKNIVAAGLADRCTLQLAYAIGVARPLSIYIDTHGTGKVTEDKLEKAVAEAMDLTPRGIRKHLDLNKPIYARTSSYGHFGRTPDAEGGFSWEKTDLAEALKRAI.

Residue His16 participates in ATP binding. Asp18 provides a ligand contact to Mg(2+). A K(+)-binding site is contributed by Glu51. 2 residues coordinate L-methionine: Glu64 and Gln108. Residues 108–118 (QSADIAQGVDA) form a flexible loop region. Residues 176–178 (DSK), 242–243 (KF), Asp251, 257–258 (RK), Ala274, and Lys278 each bind ATP. Asp251 contacts L-methionine. Lys282 lines the L-methionine pocket.

It belongs to the AdoMet synthase family. In terms of assembly, homotetramer; dimer of dimers. Mg(2+) serves as cofactor. It depends on K(+) as a cofactor.

The protein resides in the cytoplasm. The enzyme catalyses L-methionine + ATP + H2O = S-adenosyl-L-methionine + phosphate + diphosphate. Its pathway is amino-acid biosynthesis; S-adenosyl-L-methionine biosynthesis; S-adenosyl-L-methionine from L-methionine: step 1/1. In terms of biological role, catalyzes the formation of S-adenosylmethionine (AdoMet) from methionine and ATP. The overall synthetic reaction is composed of two sequential steps, AdoMet formation and the subsequent tripolyphosphate hydrolysis which occurs prior to release of AdoMet from the enzyme. This is S-adenosylmethionine synthase 2 from Rhodopseudomonas palustris (strain BisB18).